Here is a 236-residue protein sequence, read N- to C-terminus: Endonuclease NucS (236 aa).

This sequence belongs to the NucS endonuclease family.

It localises to the cytoplasm. Cleaves both 3' and 5' ssDNA extremities of branched DNA structures. This Saccharolobus solfataricus (strain ATCC 35092 / DSM 1617 / JCM 11322 / P2) (Sulfolobus solfataricus) protein is Endonuclease NucS.